A 256-amino-acid chain; its full sequence is RNA polymerase sigma factor SigI1 (256 aa).

The short motif at 67–80 is the Polymerase core binding element; the sequence is DEFSIALSAFNEAI. Residues 205-224 constitute a DNA-binding region (H-T-H motif); the sequence is RNELKKKAKVHGRTIGNNRK.

This sequence belongs to the sigma-70 factor family. SigI subfamily. Interacts with RsgI1.

Its subcellular location is the cytoplasm. With respect to regulation, negatively regulated by the anti-sigma-I factor RsgI1. Binding of the polysaccharide substrate to RsgI1 may lead to the release and activation of SigI1. Sigma factors are initiation factors that promote the attachment of RNA polymerase to specific initiation sites and are then released. This sigma factor is involved in regulation of cellulosomal genes via an external polysaccharide-sensing mechanism. SigI1 promotes transcription from sigI1 and celS promoters. This is RNA polymerase sigma factor SigI1 from Acetivibrio thermocellus (strain ATCC 27405 / DSM 1237 / JCM 9322 / NBRC 103400 / NCIMB 10682 / NRRL B-4536 / VPI 7372) (Clostridium thermocellum).